The following is a 972-amino-acid chain: Mast/stem cell growth factor receptor Kit (972 aa).

The N-terminal stretch at 1-25 (MRGARGAWDFLCVLLLLLRVQTGSS) is a signal peptide. The Extracellular portion of the chain corresponds to 26–520 (QPSVSPEEAS…QIQPHTLFTP (495 aa)). Ig-like C2-type domains lie at 27–112 (PSVS…VFVR), 121–205 (DRSL…LKVR), 212–308 (PVVS…LEVV), 317–410 (PMIN…VYVN), and 413–507 (PEIL…FNFA). Cys58 and Cys97 form a disulfide bridge. Asn130 and Asn145 each carry an N-linked (GlcNAc...) asparagine glycan. Cystine bridges form between Cys136–Cys186, Cys151–Cys183, and Cys233–Cys290. N-linked (GlcNAc...) asparagine glycosylation is found at Asn283, Asn300, Asn320, Asn352, Asn367, Asn463, and Asn486. The cysteines at positions 428 and 491 are disulfide-linked. Residues 521-541 (LLIGFVVVAGMMCIIVMILTY) form a helical membrane-spanning segment. At 542-972 (KYLQKPMYEV…SQPLLVRDDV (431 aa)) the chain is on the cytoplasmic side. 2 positions are modified to phosphotyrosine: Tyr543 and Tyr549. Tyr564 contacts Mg(2+). Phosphotyrosine; by autocatalysis is present on residues Tyr564 and Tyr566. Residues 564-566 (YVY) are important for interaction with phosphotyrosine-binding proteins. The 349-residue stretch at 585–933 (LSFGKTLGAG…ISESTNHIYS (349 aa)) folds into the Protein kinase domain. ATP-binding positions include 592 to 599 (GAGAFGKV), Lys619, and 667 to 673 (EYCCYGD). Phosphotyrosine; by autocatalysis occurs at positions 699 and 717. Tyr726 is subject to Phosphotyrosine. Phosphoserine; by PKC/PRKCA occurs at positions 737 and 742. The Proton acceptor role is filled by Asp788. Position 792 (Arg792) interacts with ATP. The Mg(2+) site is built by Asn793 and Asp806. A Phosphoserine modification is found at Ser817. Tyr819 carries the post-translational modification Phosphotyrosine; by autocatalysis. Position 887 is a phosphoserine (Ser887). Tyr896 carries the post-translational modification Phosphotyrosine. Tyr932 is subject to Phosphotyrosine; by autocatalysis. Residue Ser955 is modified to Phosphoserine.

The protein belongs to the protein kinase superfamily. Tyr protein kinase family. CSF-1/PDGF receptor subfamily. Monomer in the absence of bound KITLG/SCF. Homodimer in the presence of bound KITLG/SCF, forming a heterotetramer with two KITLG/SCF molecules. Interacts (via phosphorylated tyrosine residues) with the adapter proteins GRB2 and GRB7 (via SH2 domain), and SH2B2/APS. Interacts (via C-terminus) with MPDZ (via the tenth PDZ domain). Interacts (via phosphorylated tyrosine residues) with PIK3R1 and PIK3CD. Interacts (via phosphorylated tyrosine) with CRK (isoform Crk-II), FYN, SHC1 and MATK/CHK (via SH2 domain). Interacts with LYN and FES/FPS. Interacts (via phosphorylated tyrosine residues) with the protein phosphatases PTPN6/SHP-1 (via SH2 domain), PTPN11/SHP-2 (via SH2 domain) and PTPRU. Interacts with PLCG1. Interacts with DOK1 and TEC. Interacts with IL1RAP (independent of stimulation with KITLG/SCF). A mast cell-specific KITLG/SCF-induced interleukin-33 signaling complex contains IL1RL1, IL1RAP, KIT and MYD88. Ubiquitinated by SOCS6. KIT is rapidly ubiquitinated after autophosphorylation induced by KITLG/SCF binding, leading to internalization and degradation. Post-translationally, autophosphorylated on tyrosine residues. KITLG/SCF binding promotes autophosphorylation. Phosphorylated tyrosine residues are important for interaction with specific binding partners.

The protein localises to the cell membrane. The catalysed reaction is L-tyrosyl-[protein] + ATP = O-phospho-L-tyrosyl-[protein] + ADP + H(+). Present in an inactive conformation in the absence of bound ligand. KITLG/SCF binding leads to dimerization and activation by autophosphorylation on tyrosine residues. Activity is down-regulated by PRKCA-mediated phosphorylation on serine residues. Tyrosine-protein kinase that acts as a cell-surface receptor for the cytokine KITLG/SCF and plays an essential role in the regulation of cell survival and proliferation, hematopoiesis, stem cell maintenance, gametogenesis, mast cell development, migration and function, and in melanogenesis. In response to KITLG/SCF binding, KIT can activate several signaling pathways. Phosphorylates PIK3R1, PLCG1, SH2B2/APS and CBL. Activates the AKT1 signaling pathway by phosphorylation of PIK3R1, the regulatory subunit of phosphatidylinositol 3-kinase. Activated KIT also transmits signals via GRB2 and activation of RAS, RAF1 and the MAP kinases MAPK1/ERK2 and/or MAPK3/ERK1. Promotes activation of STAT family members STAT1, STAT3, STAT5A and STAT5B. Activation of PLCG1 leads to the production of the cellular signaling molecules diacylglycerol and inositol 1,4,5-trisphosphate. KIT signaling is modulated by protein phosphatases, and by rapid internalization and degradation of the receptor. Activated KIT promotes phosphorylation of the protein phosphatases PTPN6/SHP-1 and PTPRU, and of the transcription factors STAT1, STAT3, STAT5A and STAT5B. Promotes phosphorylation of PIK3R1, CBL, CRK (isoform Crk-II), LYN, MAPK1/ERK2 and/or MAPK3/ERK1, PLCG1, SRC and SHC1. The sequence is that of Mast/stem cell growth factor receptor Kit (KIT) from Callithrix jacchus (White-tufted-ear marmoset).